A 375-amino-acid chain; its full sequence is Alcohol dehydrogenase 1A (375 aa).

The residue at position 2 (Ser-2) is an N-acetylserine. Ser-23 carries the post-translational modification Phosphoserine. Cys-47 serves as a coordination point for Zn(2+). An NAD(+)-binding site is contributed by 48–52 (GTDDH). Zn(2+)-binding residues include His-68, Cys-98, Cys-101, Cys-104, Cys-112, and Cys-175. NAD(+) is bound by residues 200-205 (GLGGVG), Asp-224, Lys-229, Ile-270, 293-295 (VGV), 318-320 (AVL), and Arg-370.

This sequence belongs to the zinc-containing alcohol dehydrogenase family. As to quaternary structure, dimer of identical or heterodimer of closely related subunits alpha, beta, or gamma that are encoded by genes ADH1A, ADH1B, and ADH1C, respectively. The cofactor is Zn(2+).

Its subcellular location is the cytoplasm. It catalyses the reaction a primary alcohol + NAD(+) = an aldehyde + NADH + H(+). It carries out the reaction a secondary alcohol + NAD(+) = a ketone + NADH + H(+). The catalysed reaction is butan-1-ol + NAD(+) = butanal + NADH + H(+). The enzyme catalyses 1-propanol + NAD(+) = propanal + NADH + H(+). In terms of biological role, alcohol dehydrogenase. Oxidizes primary as well as secondary alcohols. Ethanol is a very poor substrate. This is Alcohol dehydrogenase 1A (ADH1A) from Pongo abelii (Sumatran orangutan).